The following is a 366-amino-acid chain: MKMSFRWYGKKDPVTLEEIKAIPGMQGIVTAVYDVPVGQAWPLENILELKKMVEEAGLEITVIESIPVHEDIKQGKPNRDALIENYKTSIRNVGAAGIPVVCYNFMPVFDWTRSDLHHPLPDGSTSLAFLKSDLAGVDPVADDLNLPGWDSSYSKEEMKAIIENYRQNISEEDLWANLEYFIKAILPTAEEAGVKMAIHPDDPPYGIFGLPRIITGQEAVERFLNLYDSEHNGITMCVGSYASDPKNDVLAMTEYALKRNRINFMHTRNVTAGAWGFQETAHLSQAGDIDMNAVVKLLVDYDWQGSLRPDHGRRIWGDQTKTPGYGLYDRALGATYFNGLYEANMRAAGKTPDFGIKAKTVGTKEG.

It belongs to the mannonate dehydratase family. It depends on Fe(2+) as a cofactor. Requires Mn(2+) as cofactor.

The enzyme catalyses D-mannonate = 2-dehydro-3-deoxy-D-gluconate + H2O. The protein operates within carbohydrate metabolism; pentose and glucuronate interconversion. Functionally, catalyzes the dehydration of D-mannonate. The polypeptide is Mannonate dehydratase (Streptococcus suis (strain 98HAH33)).